We begin with the raw amino-acid sequence, 292 residues long: Protease HtpX (292 aa).

2 helical membrane-spanning segments follow: residues 5-25 and 34-54; these read IFLFLLTNVAVLMLAGVVMSV and SGLLVMAAIFGFGGSFISLLL. His-140 is a binding site for Zn(2+). Residue Glu-141 is part of the active site. Position 144 (His-144) interacts with Zn(2+). Transmembrane regions (helical) follow at residues 155–175 and 193–213; these read LLQGVLNTFVIVLARVVGGII and IIVFVLEMVFGMFATMIAMWF. Glu-218 is a Zn(2+) binding site.

Belongs to the peptidase M48B family. Requires Zn(2+) as cofactor.

The protein resides in the cell inner membrane. This is Protease HtpX from Xanthomonas oryzae pv. oryzae (strain MAFF 311018).